A 489-amino-acid chain; its full sequence is 3-octaprenyl-4-hydroxybenzoate carboxy-lyase (489 aa).

A Mn(2+)-binding site is contributed by Asn172. Residues 175-177, 189-191, and 194-195 each bind prenylated FMN; these read VYR, RWL, and RG. Glu240 contributes to the Mn(2+) binding site. The active-site Proton donor is the Asp288.

It belongs to the UbiD family. As to quaternary structure, homohexamer. Requires prenylated FMN as cofactor. Mn(2+) serves as cofactor.

The protein localises to the cell membrane. The enzyme catalyses a 4-hydroxy-3-(all-trans-polyprenyl)benzoate + H(+) = a 2-(all-trans-polyprenyl)phenol + CO2. The protein operates within cofactor biosynthesis; ubiquinone biosynthesis. Functionally, catalyzes the decarboxylation of 3-octaprenyl-4-hydroxy benzoate to 2-octaprenylphenol, an intermediate step in ubiquinone biosynthesis. The sequence is that of 3-octaprenyl-4-hydroxybenzoate carboxy-lyase from Wigglesworthia glossinidia brevipalpis.